The sequence spans 437 residues: Arginine biosynthesis bifunctional protein ArgJ, mitochondrial (437 aa).

6 residues coordinate substrate: threonine 173, lysine 200, threonine 211, glutamate 297, asparagine 432, and serine 437. Residue threonine 211 is the Nucleophile of the active site.

The protein belongs to the ArgJ family. Heterodimer of an alpha and a beta chain. The alpha and beta chains are autoproteolytically processed from a single precursor protein within the mitochondrion.

It is found in the mitochondrion matrix. The catalysed reaction is N(2)-acetyl-L-ornithine + L-glutamate = N-acetyl-L-glutamate + L-ornithine. The enzyme catalyses L-glutamate + acetyl-CoA = N-acetyl-L-glutamate + CoA + H(+). It functions in the pathway amino-acid biosynthesis; L-arginine biosynthesis; L-ornithine and N-acetyl-L-glutamate from L-glutamate and N(2)-acetyl-L-ornithine (cyclic): step 1/1. Its pathway is amino-acid biosynthesis; L-arginine biosynthesis; N(2)-acetyl-L-ornithine from L-glutamate: step 1/4. Functionally, catalyzes two activities which are involved in the cyclic version of arginine biosynthesis: the synthesis of acetylglutamate from glutamate and acetyl-CoA, and of ornithine by transacetylation between acetylornithine and glutamate. The sequence is that of Arginine biosynthesis bifunctional protein ArgJ, mitochondrial from Zygosaccharomyces rouxii (strain ATCC 2623 / CBS 732 / NBRC 1130 / NCYC 568 / NRRL Y-229).